Here is a 266-residue protein sequence, read N- to C-terminus: Tryptophan synthase alpha chain (266 aa).

Active-site proton acceptor residues include Glu-50 and Asp-61.

It belongs to the TrpA family. As to quaternary structure, tetramer of two alpha and two beta chains.

The enzyme catalyses (1S,2R)-1-C-(indol-3-yl)glycerol 3-phosphate + L-serine = D-glyceraldehyde 3-phosphate + L-tryptophan + H2O. It participates in amino-acid biosynthesis; L-tryptophan biosynthesis; L-tryptophan from chorismate: step 5/5. Its function is as follows. The alpha subunit is responsible for the aldol cleavage of indoleglycerol phosphate to indole and glyceraldehyde 3-phosphate. The chain is Tryptophan synthase alpha chain from Alkaliphilus metalliredigens (strain QYMF).